Here is a 766-residue protein sequence, read N- to C-terminus: MQAAKPLYDYPKYWAECFGPAPFLPMSREEMDLLGWDSCDIIIVTGDAYVDHPSFGMAIIGRLLEAQGFRVGIIAQPNWQSKDDFMKLGEPNLFFGVAAGNMDSMINRYTADKKIRSDDAYTPGGLAGSRPDRASLVYSQRCKEAYKHVPIVLGGIEASLRRIAHYDYWQDKVRHSILIDASADILLFGNAERAVVEVAQRLSNGEKIETITDVRGTAFVRRDTPQGWYEIDSTRIDRPGRVDKIINPYVNTQDTQACAIEQAKGDQEDPNEAKVVQILDSPAVTREKSVIRLPSFEKVRNDPVLYAHANRVLHLETNPGNARALVQKHGEVDVWFNPPPIPMSTEEMDYVFGMPYARVPHPAYGKERIPAYEMIRFSVNIMRGCFGGCTFCSITEHEGRIIQNRSHESILHEIEEMRDKVPGFTGVVSDLGGPTANMYRIACKSPEIEKYCRKPSCVFPGICENLNTDHSSLIELYRKARALPGVKKILIASGLRYDLAVESPEYVKELVTHHVGGYLKIAPEHTERGPLDKMMKPGIGTYDRFKRMFEKFSKEAGKEQYLIPYFIAAHPGTTDEDMMNLALWLKGNGFRADQVQAFYPSPMASATAMYHSGKNPLRKVTYKSEGVEIVKSDEQRRLHKAFLRYHDPKGWPMLREALQRMGRADLIGPGKHQLIPLHQPQTDTYQSARRKNSTPAGSHKVGKDQKILTQHTGLPPRGSDGSKPWDKREKAKAEAFARNQQAAKERKEASKGGKGNKKPRQPVIPR.

The Radical SAM core domain maps to 371–649 (AYEMIRFSVN…KAFLRYHDPK (279 aa)). [4Fe-4S] cluster contacts are provided by cysteine 385, cysteine 389, and cysteine 392. Residues 670–766 (GKHQLIPLHQ…KKPRQPVIPR (97 aa)) are disordered. Residues 723 to 735 (KPWDKREKAKAEA) show a composition bias toward basic and acidic residues.

It belongs to the UPF0313 family. [4Fe-4S] cluster is required as a cofactor.

In Pseudomonas putida (strain ATCC 47054 / DSM 6125 / CFBP 8728 / NCIMB 11950 / KT2440), this protein is UPF0313 protein PP_4872.